The primary structure comprises 109 residues: RNA-binding protein Hfq (109 aa).

In terms of domain architecture, Sm spans 9 to 68; sequence DPFLNALRKEKVSVSVYLVNGIKLQGQVEAFDQFCIVLRNTVNQMVYKHAISTIVPAKSV.

This sequence belongs to the Hfq family. Homohexamer.

Functionally, RNA chaperone that binds small regulatory RNA (sRNAs) and mRNAs to facilitate mRNA translational regulation in response to envelope stress, environmental stress and changes in metabolite concentrations. Also binds with high specificity to tRNAs. This Francisella philomiragia subsp. philomiragia (strain ATCC 25017 / CCUG 19701 / FSC 153 / O#319-036) protein is RNA-binding protein Hfq.